Consider the following 239-residue polypeptide: Octanoyltransferase (239 aa).

Residues 48–236 (EGGDELVWLV…AFETVFGETT (189 aa)) form the BPL/LPL catalytic domain. Substrate contacts are provided by residues 87–94 (RGGEYTYH), 167–169 (ALG), and 180–182 (GLS). Cys-198 functions as the Acyl-thioester intermediate in the catalytic mechanism.

The protein belongs to the LipB family.

It is found in the cytoplasm. It carries out the reaction octanoyl-[ACP] + L-lysyl-[protein] = N(6)-octanoyl-L-lysyl-[protein] + holo-[ACP] + H(+). Its pathway is protein modification; protein lipoylation via endogenous pathway; protein N(6)-(lipoyl)lysine from octanoyl-[acyl-carrier-protein]: step 1/2. Functionally, catalyzes the transfer of endogenously produced octanoic acid from octanoyl-acyl-carrier-protein onto the lipoyl domains of lipoate-dependent enzymes. Lipoyl-ACP can also act as a substrate although octanoyl-ACP is likely to be the physiological substrate. The sequence is that of Octanoyltransferase from Rhizobium etli (strain ATCC 51251 / DSM 11541 / JCM 21823 / NBRC 15573 / CFN 42).